We begin with the raw amino-acid sequence, 398 residues long: Methionine import ATP-binding protein MetN 2 (398 aa).

The 240-residue stretch at 43-282 (VSLEQVGKVF…PRHGATRALL (240 aa)) folds into the ABC transporter domain. 79–86 (GRSGAGKS) contacts ATP.

It belongs to the ABC transporter superfamily. Methionine importer (TC 3.A.1.24) family. The complex is composed of two ATP-binding proteins (MetN), two transmembrane proteins (MetI) and a solute-binding protein (MetQ).

The protein resides in the cell inner membrane. It carries out the reaction L-methionine(out) + ATP + H2O = L-methionine(in) + ADP + phosphate + H(+). The enzyme catalyses D-methionine(out) + ATP + H2O = D-methionine(in) + ADP + phosphate + H(+). Functionally, part of the ABC transporter complex MetNIQ involved in methionine import. Responsible for energy coupling to the transport system. This chain is Methionine import ATP-binding protein MetN 2, found in Burkholderia lata (strain ATCC 17760 / DSM 23089 / LMG 22485 / NCIMB 9086 / R18194 / 383).